Reading from the N-terminus, the 368-residue chain is Cystathionine beta-lyase (368 aa).

Lys-221 bears the N6-(pyridoxal phosphate)lysine mark.

It belongs to the class-II pyridoxal-phosphate-dependent aminotransferase family. MalY/PatB cystathionine beta-lyase subfamily. Pyridoxal 5'-phosphate serves as cofactor.

The catalysed reaction is L,L-cystathionine + H2O = L-homocysteine + pyruvate + NH4(+). It catalyses the reaction an S-substituted L-cysteine + H2O = a thiol + pyruvate + NH4(+). It participates in amino-acid biosynthesis; L-methionine biosynthesis via de novo pathway; L-homocysteine from L-cystathionine: step 1/1. Catalyzes the transformation of cystathionine to homocysteine. The protein is Cystathionine beta-lyase (metC) of Corynebacterium glutamicum (Brevibacterium saccharolyticum).